The chain runs to 127 residues: Peroxiredoxin-2 (127 aa).

A Thioredoxin domain is found at 1–125 (LFFYPLDFTF…ALRLVQGXQY (125 aa)). Cys12 serves as the catalytic Cysteine sulfenic acid (-SOH) intermediate. Ser73 bears the Phosphoserine mark.

Belongs to the peroxiredoxin family. AhpC/Prx1 subfamily. In terms of assembly, homodimer; disulfide-linked, upon oxidation. 5 homodimers assemble to form a ring-like decamer. Interacts with TIPIN. In terms of processing, the enzyme can be inactivated by further oxidation of the cysteine sulfenic acid (C(P)-SOH) to sulphinic acid (C(P)-SO2H) instead of its condensation to a disulfide bond. It can be reactivated by forming a transient disulfide bond with sulfiredoxin SRXN1, which reduces the cysteine sulfinic acid in an ATP- and Mg-dependent manner. Acetylation increases resistance to transition to high molecular-mass complexes. Deacetylated by HDAC6 which decreases reducing activity.

Its subcellular location is the cytoplasm. The catalysed reaction is a hydroperoxide + [thioredoxin]-dithiol = an alcohol + [thioredoxin]-disulfide + H2O. Functionally, thiol-specific peroxidase that catalyzes the reduction of hydrogen peroxide and organic hydroperoxides to water and alcohols, respectively. Plays a role in cell protection against oxidative stress by detoxifying peroxides and as sensor of hydrogen peroxide-mediated signaling events. Might participate in the signaling cascades of growth factors and tumor necrosis factor-alpha by regulating the intracellular concentrations of H(2)O(2). This is Peroxiredoxin-2 (PRDX2) from Sus scrofa (Pig).